Consider the following 400-residue polypeptide: Pectinesterase B (400 aa).

Residues threonine 171 and glutamine 205 each coordinate substrate. Aspartate 228 serves as the catalytic Proton donor. Aspartate 261 (nucleophile) is an active-site residue. Positions 325 and 327 each coordinate substrate.

It belongs to the pectinesterase family.

The catalysed reaction is [(1-&gt;4)-alpha-D-galacturonosyl methyl ester](n) + n H2O = [(1-&gt;4)-alpha-D-galacturonosyl](n) + n methanol + n H(+). It participates in glycan metabolism; pectin degradation; 2-dehydro-3-deoxy-D-gluconate from pectin: step 1/5. The chain is Pectinesterase B (pemB) from Pectobacterium parmentieri.